We begin with the raw amino-acid sequence, 122 residues long: Ribosome-binding factor A (122 aa).

It belongs to the RbfA family. Monomer. Binds 30S ribosomal subunits, but not 50S ribosomal subunits or 70S ribosomes.

It is found in the cytoplasm. In terms of biological role, one of several proteins that assist in the late maturation steps of the functional core of the 30S ribosomal subunit. Associates with free 30S ribosomal subunits (but not with 30S subunits that are part of 70S ribosomes or polysomes). Required for efficient processing of 16S rRNA. May interact with the 5'-terminal helix region of 16S rRNA. This chain is Ribosome-binding factor A, found in Streptococcus agalactiae serotype III (strain NEM316).